The chain runs to 206 residues: Phosphoheptose isomerase (206 aa).

The SIS domain maps to 37 to 195 (LVDAFKAGKK…IEQKMDINNE (159 aa)). 52–54 (NGG) contributes to the substrate binding site. Zn(2+) contacts are provided by histidine 61 and glutamate 65. Substrate is bound by residues glutamate 65, 93–94 (ND), 119–121 (STS), serine 124, and glutamine 172. The Zn(2+) site is built by glutamine 172 and histidine 180.

Belongs to the SIS family. GmhA subfamily. In terms of assembly, homotetramer. It depends on Zn(2+) as a cofactor.

Its subcellular location is the cytoplasm. The enzyme catalyses 2 D-sedoheptulose 7-phosphate = D-glycero-alpha-D-manno-heptose 7-phosphate + D-glycero-beta-D-manno-heptose 7-phosphate. It functions in the pathway carbohydrate biosynthesis; D-glycero-D-manno-heptose 7-phosphate biosynthesis; D-glycero-alpha-D-manno-heptose 7-phosphate and D-glycero-beta-D-manno-heptose 7-phosphate from sedoheptulose 7-phosphate: step 1/1. In terms of biological role, catalyzes the isomerization of sedoheptulose 7-phosphate in D-glycero-D-manno-heptose 7-phosphate. This Hamiltonella defensa subsp. Acyrthosiphon pisum (strain 5AT) protein is Phosphoheptose isomerase.